We begin with the raw amino-acid sequence, 462 residues long: MDAMQKTIEYTSVSRIAGPLMVIDGIEGIAYGEIVDITTPNGDKRTGQVLEAREEIAVVQVFEGTSELNTSETKVRFTGDTAKIGVSYDMLGRIFNGAGKPLDGGPEIIAEEKLDINGYPLNPVSRNPPNAFVQTGVSTIDGTNTLVRGQKIPIFSGSGLPHNKLATQIARQAKVRGEGEQFAVVFAAMGITGEESNYFMDEFKKTGALEKAVVFINLADDPAIERILTPRIALTTAEYLAYEKGMHVLVILTDLTNYCEALREIAAARNEVPGRRGYPGYMYTDLACLYERAGRVKGKEGTVTQIPILTMPDDDITHPIPDLTGYITEGQIVLSRELNRKGVYPPVDILPSLSRLAGNGQGEGKTRDDHSKVISQAYAAYAEGRGLRDLVAVVGEEALTERDRSFLKFADAFENSIVTQGVDEDRSIEETLDYVWDLLTILPREELKRVSDELIEKYLPKK.

Belongs to the ATPase alpha/beta chains family. Has multiple subunits with at least A(3), B(3), C, D, E, F, H, I and proteolipid K(x).

The protein localises to the cell membrane. In terms of biological role, component of the A-type ATP synthase that produces ATP from ADP in the presence of a proton gradient across the membrane. The B chain is a regulatory subunit. This chain is A-type ATP synthase subunit B, found in Methanococcus maripaludis (strain DSM 14266 / JCM 13030 / NBRC 101832 / S2 / LL).